A 458-amino-acid chain; its full sequence is Argininosuccinate lyase (458 aa).

This sequence belongs to the lyase 1 family. Argininosuccinate lyase subfamily.

The protein resides in the cytoplasm. It carries out the reaction 2-(N(omega)-L-arginino)succinate = fumarate + L-arginine. The protein operates within amino-acid biosynthesis; L-arginine biosynthesis; L-arginine from L-ornithine and carbamoyl phosphate: step 3/3. The chain is Argininosuccinate lyase from Salmonella schwarzengrund (strain CVM19633).